An 858-amino-acid polypeptide reads, in one-letter code: Rho GTPase-activating protein 17 (858 aa).

One can recognise a BAR domain in the interval 14 to 246; that stretch reads QTVGRAEKTE…MRAHQDKWAE (233 aa). Residues 252-442 form the Rho-GAP domain; the sequence is TPLEEHLKRS…PIIQHADWFF (191 aa). Residues 459 to 475 show a composition bias toward polar residues; it reads TPNSNHSSHTGNDSDSG. The interval 459–482 is disordered; the sequence is TPNSNHSSHTGNDSDSGTLERKRP. Serine 484 is modified (phosphoserine). The disordered stretch occupies residues 516–823; that stretch reads RKHISPAFQP…VTDTNSRVSE (308 aa). Residues 543–552 are compositionally biased toward polar residues; that stretch reads PSQSSRADSN. Over residues 553–563 the composition is skewed to low complexity; that stretch reads SVGGPVPSSSG. Serine 575 is subject to Phosphoserine. The span at 592–617 shows a compositional bias: polar residues; sequence RNSNQITTVPNQAQTGGNSHQLSVGT. Positions 637–650 are enriched in pro residues; that stretch reads APAPPKPGNPPPGH. Residues 653 to 702 are compositionally biased toward low complexity; the sequence is GQSSPGTGTSPKPSTRSPSPPQQQQQQQQQQQQQQQQQQQQQQQQQQQQQ. A phosphoserine mark is found at serine 710 and serine 712. 2 stretches are compositionally biased toward pro residues: residues 716–729 and 738–756; these read IQAPNHPPPQPPTQ and EPGPTPPQTPTPPSTPPPA. 3 positions are modified to phosphothreonine: threonine 742, threonine 746, and threonine 748. An SH3-binding motif is present at residues 742–755; the sequence is TPPQTPTPPSTPPP. Serine 751 bears the Phosphoserine mark. Phosphothreonine is present on threonine 752. The span at 757-769 shows a compositional bias: polar residues; that stretch reads KQNSSQSETTQLH. A compositionally biased stretch (pro residues) spans 784–794; it reads RPSVPPPPNPP. Positions 806 to 823 are enriched in polar residues; it reads SVPTASRIVTDTNSRVSE.

As to quaternary structure, component of a complex whose core is composed of ARHGAP17, AMOT, PALS1, PATJ and PARD3/PAR3. Interacts with NHERF1, FNBP1, TRIP10, CAPZA (CAPZA1, CAPZA2 or CAPZA3), CAPZB, CD2AP and SH3KBP1/CIN85. As to expression, highly expressed in brain; neuron-specific (at protein level). Isoform 2, isoform 3 and isoform 4 are predominantly expressed in neuronal tissues and correlate well with the differentiation of neurons, while isoform 1 is strongly expressed in embryonic brain.

The protein resides in the membrane. The protein localises to the cytoplasm. It is found in the cell junction. Its subcellular location is the tight junction. In terms of biological role, rho GTPase-activating protein involved in the maintenance of tight junction by regulating the activity of CDC42, thereby playing a central role in apical polarity of epithelial cells. Specifically acts as a GTPase activator for the CDC42 GTPase by converting it to an inactive GDP-bound state. The complex formed with AMOT acts by regulating the uptake of polarity proteins at tight junctions, possibly by deciding whether tight junction transmembrane proteins are recycled back to the plasma membrane or sent elsewhere. Participates in the Ca(2+)-dependent regulation of exocytosis, possibly by catalyzing GTPase activity of Rho family proteins and by inducing the reorganization of the cortical actin filaments. Acts as a GTPase activator in vitro for RAC1. This Rattus norvegicus (Rat) protein is Rho GTPase-activating protein 17 (Arhgap17).